The following is a 96-amino-acid chain: MYINFTSFLIKEKKYNVRFLLSRNRKIYAAVGEGHLSGFVTKNHKISRLSFIFSKKKKVFFTIFDTIITIIVRSGIPFPLLCSFGRNKIYILFNVL.

Residue Asn-4 is glycosylated (N-linked (GlcNAc...) asparagine). The helical transmembrane segment at 59–81 (VFFTIFDTIITIIVRSGIPFPLL) threads the bilayer.

The protein localises to the membrane. This is an uncharacterized protein from Saccharomyces cerevisiae (strain ATCC 204508 / S288c) (Baker's yeast).